Here is a 525-residue protein sequence, read N- to C-terminus: MNDFWQHCSALLERELTPQQYVTWIKPLAPVAFDASANTLSIAAPNRFKLDWVKSQFSGRIADLAREFWNTPIEVQFVLDPKAGMRSAPAGAAPAAPRAPLAPNGPAATVAAIAANLTANASAAPAAPADVPMTPSAAAARHLNADDADIDLPSLPAHEAAAGRRTWRPGPGAAPANGGEADSMYERSKLNPVLTFDNFVTGKANQLARAAAIQVADNPGISYNPLFLYGGVGLGKTHLIHAIGNQLLLDKAGARIRYIHAEQYVSDVVKAYQRKAFDDFKRYYHSLDLLLIDDIQFFSGKSRTQEEFFYAFEALVANKAQVIITSDTYPKEISGIDDRLISRFDSGLTVAIEPPELEMRVAILMRKAQSEGVNLSEDVAFFVAKHLRSNVRELEGALRKILAYSKFHGREISIELTKEALKDLLTVQNRQISVENIQKTVADFYNIKVADMYSKKRPANIARPRQIAMYLAKELTQKSLPEIGELFGGRDHTTVLHAVRKIADERSKDAQLNHELHVLEQTLKG.

The segment at 1-71 is domain I, interacts with DnaA modulators; the sequence is MNDFWQHCSA…ADLAREFWNT (71 aa). A domain II region spans residues 71–188; the sequence is TPIEVQFVLD…GEADSMYERS (118 aa). The tract at residues 160–182 is disordered; that stretch reads AAAGRRTWRPGPGAAPANGGEAD. Low complexity predominate over residues 169-181; sequence PGPGAAPANGGEA. Residues 189–405 form a domain III, AAA+ region region; it reads KLNPVLTFDN…GALRKILAYS (217 aa). 4 residues coordinate ATP: Gly-233, Gly-235, Lys-236, and Thr-237. The domain IV, binds dsDNA stretch occupies residues 406 to 525; the sequence is KFHGREISIE…LHVLEQTLKG (120 aa).

This sequence belongs to the DnaA family. As to quaternary structure, oligomerizes as a right-handed, spiral filament on DNA at oriC.

The protein resides in the cytoplasm. Its function is as follows. Plays an essential role in the initiation and regulation of chromosomal replication. ATP-DnaA binds to the origin of replication (oriC) to initiate formation of the DNA replication initiation complex once per cell cycle. Binds the DnaA box (a 9 base pair repeat at the origin) and separates the double-stranded (ds)DNA. Forms a right-handed helical filament on oriC DNA; dsDNA binds to the exterior of the filament while single-stranded (ss)DNA is stabiized in the filament's interior. The ATP-DnaA-oriC complex binds and stabilizes one strand of the AT-rich DNA unwinding element (DUE), permitting loading of DNA polymerase. After initiation quickly degrades to an ADP-DnaA complex that is not apt for DNA replication. Binds acidic phospholipids. The sequence is that of Chromosomal replication initiator protein DnaA from Burkholderia cenocepacia (strain ATCC BAA-245 / DSM 16553 / LMG 16656 / NCTC 13227 / J2315 / CF5610) (Burkholderia cepacia (strain J2315)).